A 61-amino-acid chain; its full sequence is MWIYRSQKSKNPDNLLQLWRVRKDYRGPLKPYSQQFSYAGSIVICPEKFKTSFCARSFCAL.

Controls the copy number in gene replication. The protein is Protein CopA/IncA (copA) of Escherichia coli.